The sequence spans 309 residues: MKFKNILVVLNPSNEKQYALARAVRLVEEQKNETKVKITALLSVYDLSYEMSALLSSEERSEMHQQVIEKHRHAVQYYLDKYANPEIELQSHIVWNSNEADAINEEVENNNYDLVVKYTKDEEKLTSLIFTPIDWQLLRKCPIPVLMVRDGDWKHPRRILVAVNVSGEQEYQDEFNQELVETGISLAENLNRGNVHLVAAYPSAPINMAIDLPEFNTSGYENGIRGQHLINMKALRQKFGIDEDHTHVREGFPEEVIPEVAKEIEAELVILGTVGRTGLSAALLGNTAEHVISKLSCNLLGIKPSKKDD.

The protein belongs to the universal stress protein A family.

It localises to the cytoplasm. Required for resistance to DNA-damaging agents. This chain is Universal stress protein E homolog (uspE), found in Haemophilus influenzae (strain ATCC 51907 / DSM 11121 / KW20 / Rd).